Here is a 145-residue protein sequence, read N- to C-terminus: Hemoglobin fetal subunit beta (145 aa).

The Globin domain maps to 1 to 145 (MLSAEEKAAV…VANALAHRYH (145 aa)). 2 residues coordinate heme b: histidine 62 and histidine 91.

It belongs to the globin family. In terms of assembly, heterotetramer of two alpha chains and two beta chains. In terms of tissue distribution, red blood cells.

Involved in oxygen transport from the lung to the various peripheral tissues. The chain is Hemoglobin fetal subunit beta from Bos taurus (Bovine).